Here is a 410-residue protein sequence, read N- to C-terminus: Aspartic proteinase Asp1 (410 aa).

The N-terminal stretch at 1 to 23 (MTARLALLASLLLLLQLVPPSSA) is a signal peptide. The propeptide at 24-46 (VVLELHGNVYPIGHFFVTMNIGD) is removed in mature form. The region spanning 38–392 (FFVTMNIGDP…DSERSLLGWV (355 aa)) is the Peptidase A1 domain. Catalysis depends on residues Asp-56 and Asp-257.

It belongs to the peptidase A1 family. Expressed in pollen, nucellus, ovary wall, shoot and root meristem, coleoptiles of immature seeds, and somatic embryos.

Possesses protease activity in vitro. The protein is Aspartic proteinase Asp1 (ASP1) of Oryza sativa subsp. indica (Rice).